The chain runs to 467 residues: Uronate isomerase (467 aa).

This sequence belongs to the metallo-dependent hydrolases superfamily. Uronate isomerase family.

The enzyme catalyses D-glucuronate = D-fructuronate. It carries out the reaction aldehydo-D-galacturonate = keto-D-tagaturonate. Its pathway is carbohydrate metabolism; pentose and glucuronate interconversion. In Haemophilus influenzae (strain 86-028NP), this protein is Uronate isomerase.